The primary structure comprises 137 residues: MKYRFIDHTADIAFEVYGSNLRELFENAALAFYDAFVDTSGIGIEREVGVECEGEDVEITLYRWLNELLYLFDTEFFAAKDVEVEVEEGDGVKASGKLRGGRFSAEMVKVEPKAITLHKFRVEKTDKGYVAFVVVDI.

Ca(2+) contacts are provided by aspartate 11, aspartate 136, and isoleucine 137.

This sequence belongs to the archease family.

In terms of biological role, activates the tRNA-splicing ligase complex by facilitating the enzymatic turnover of catalytic subunit RtcB. Acts by promoting the guanylylation of RtcB, a key intermediate step in tRNA ligation. Can also alter the NTP specificity of RtcB such that ATP, dGTP or ITP is used efficiently. This chain is Protein archease, found in Archaeoglobus fulgidus (strain ATCC 49558 / DSM 4304 / JCM 9628 / NBRC 100126 / VC-16).